A 529-amino-acid chain; its full sequence is Probable pectinesterase/pectinesterase inhibitor 35 (529 aa).

Residues 1-34 form the signal peptide; it reads MATTSFSLPNHKFGIKLMLFLVLNLLSLQTSVFA. The segment at 36–180 is pectinesterase inhibitor 35; sequence SSNSKFTKIS…TGLLTNSLDM (145 aa). The tract at residues 42 to 64 is disordered; it reads TKISRHPNSDSSSRTKPSTSSNK. Over residues 50–64 the composition is skewed to low complexity; sequence SDSSSRTKPSTSSNK. 3 N-linked (GlcNAc...) asparagine glycosylation sites follow: Asn86, Asn169, and Asn193. Residues 228–514 are pectinesterase 35; the sequence is HAVVAADGSG…FTVSGFIDGN (287 aa). Thr302 and Gln332 together coordinate substrate. Asp355 acts as the Proton donor; for pectinesterase activity in catalysis. Asp376 (nucleophile; for pectinesterase activity) is an active-site residue. 2 residues coordinate substrate: Arg434 and Trp436.

This sequence in the N-terminal section; belongs to the PMEI family. It in the C-terminal section; belongs to the pectinesterase family. Expressed in siliques.

It is found in the secreted. The protein resides in the cell wall. The enzyme catalyses [(1-&gt;4)-alpha-D-galacturonosyl methyl ester](n) + n H2O = [(1-&gt;4)-alpha-D-galacturonosyl](n) + n methanol + n H(+). The protein operates within glycan metabolism; pectin degradation; 2-dehydro-3-deoxy-D-gluconate from pectin: step 1/5. In terms of biological role, acts in the modification of cell walls via demethylesterification of cell wall pectin. The protein is Probable pectinesterase/pectinesterase inhibitor 35 (PME35) of Arabidopsis thaliana (Mouse-ear cress).